A 326-amino-acid chain; its full sequence is ATP-dependent 6-phosphofructokinase (326 aa).

Glycine 12 is a binding site for ATP. 22-26 (RAIIK) lines the ADP pocket. Residues 73–74 (RF) and 103–106 (GDGS) each bind ATP. Aspartate 104 is a Mg(2+) binding site. 126–128 (TID) provides a ligand contact to substrate. The active-site Proton acceptor is the aspartate 128. Arginine 155 is an ADP binding site. Residues arginine 163 and 170-172 (MGH) contribute to the substrate site. ADP is bound by residues 186–188 (GSE), lysine 212, and 215–217 (KRS). Substrate contacts are provided by residues glutamate 224, lysine 246, and 252-255 (HIQR).

Belongs to the phosphofructokinase type A (PFKA) family. ATP-dependent PFK group I subfamily. Prokaryotic clade 'B1' sub-subfamily. In terms of assembly, homotetramer. Requires Mg(2+) as cofactor.

The protein resides in the cytoplasm. The catalysed reaction is beta-D-fructose 6-phosphate + ATP = beta-D-fructose 1,6-bisphosphate + ADP + H(+). The protein operates within carbohydrate degradation; glycolysis; D-glyceraldehyde 3-phosphate and glycerone phosphate from D-glucose: step 3/4. Its activity is regulated as follows. Allosterically activated by ADP and other diphosphonucleosides, and allosterically inhibited by phosphoenolpyruvate. In terms of biological role, catalyzes the phosphorylation of D-fructose 6-phosphate to fructose 1,6-bisphosphate by ATP, the first committing step of glycolysis. The protein is ATP-dependent 6-phosphofructokinase of Mycoplasmopsis pulmonis (strain UAB CTIP) (Mycoplasma pulmonis).